The following is a 407-amino-acid chain: Venom metalloproteinase 3 (407 aa).

Residues N42, N91, N126, and N166 are each glycosylated (N-linked (GlcNAc...) asparagine). The Peptidase M12B domain occupies 191–405; the sequence is FYPKLLVLVD…TSAACLKDTY (215 aa). Disulfide bonds link C317/C400 and C356/C384. A Zn(2+)-binding site is contributed by H340. E341 is a catalytic residue. Zn(2+)-binding residues include H344 and H350. An N-linked (GlcNAc...) asparagine glycan is attached at N391.

This sequence in the C-terminal section; belongs to the venom metalloproteinase (M12B) family. As to quaternary structure, monomer. Requires Zn(2+) as cofactor. As to expression, expressed by the venom gland.

Its subcellular location is the secreted. With respect to regulation, the gelatinase activity is inhibited by EDTA. The recombinant protein has gelatinase activity. In vivo, injection of this recombinant into fifth instar L.oleracea (host) larvae results in partial insect mortality associated with the molt to sixth instar, with surviving insects showing retarded development and growth. This chain is Venom metalloproteinase 3, found in Eulophus pennicornis (Parasitoid wasp).